The sequence spans 261 residues: uncharacterized protein (261 aa).

Residues D43, H45, D75, N106, H197, and H199 each coordinate a divalent metal cation.

Belongs to the metallophosphoesterase superfamily. The cofactor is a divalent metal cation.

This is an uncharacterized protein from Aquifex aeolicus (strain VF5).